Consider the following 254-residue polypeptide: Flavin-dependent thymidylate synthase (254 aa).

One can recognise a ThyX domain in the interval leucine 7–tyrosine 237. Residues serine 71, arginine 95–arginine 97, and glutamine 103 each bind FAD. Residues glutamate 92 to arginine 95, glutamine 103 to arginine 107, and arginine 176 contribute to the dUMP site. The ThyX motif signature appears at arginine 95 to serine 105. FAD is bound by residues asparagine 192–arginine 194 and histidine 198. Arginine 203 is a dUMP binding site. Arginine 203 acts as the Involved in ionization of N3 of dUMP, leading to its activation in catalysis.

It belongs to the thymidylate synthase ThyX family. Homotetramer. Requires FAD as cofactor.

The enzyme catalyses dUMP + (6R)-5,10-methylene-5,6,7,8-tetrahydrofolate + NADPH + H(+) = dTMP + (6S)-5,6,7,8-tetrahydrofolate + NADP(+). It functions in the pathway pyrimidine metabolism; dTTP biosynthesis. Catalyzes the reductive methylation of 2'-deoxyuridine-5'-monophosphate (dUMP) to 2'-deoxythymidine-5'-monophosphate (dTMP) while utilizing 5,10-methylenetetrahydrofolate (mTHF) as the methyl donor, and NADPH and FADH(2) as the reductant. This chain is Flavin-dependent thymidylate synthase, found in Mycobacterium sp. (strain KMS).